We begin with the raw amino-acid sequence, 262 residues long: Cap-specific mRNA (nucleoside-2'-O-)-methyltransferase (262 aa).

Residues 34 to 226 (TRRPRCWRKL…ERYLICFNKL (193 aa)) enclose the RrmJ-type SAM-dependent 2'-O-MTase domain. 2 residues coordinate S-adenosyl-L-methionine: Gly67 and Asp140. The active-site Proton acceptor is Lys180.

It carries out the reaction a 5'-end (N(7)-methyl 5'-triphosphoguanosine)-ribonucleoside in mRNA + S-adenosyl-L-methionine = a 5'-end (N(7)-methyl 5'-triphosphoguanosine)-(2'-O-methyl-ribonucleoside) in mRNA + S-adenosyl-L-homocysteine + H(+). Its function is as follows. S-adenosyl-L-methionine-dependent methyltransferase that mediates mRNA cap 2'-O-ribose methylation to the 5'-cap structure of late viral transcripts. The polypeptide is Cap-specific mRNA (nucleoside-2'-O-)-methyltransferase (Lepidoptera (butterflies and moths)).